The following is a 51-amino-acid chain: Sperm protamine P1 (51 aa).

2 disulfides stabilise this stretch: cysteine 7-cysteine 15 and cysteine 40-cysteine 48.

Belongs to the protamine P1 family. As to quaternary structure, cross-linked by interchain disulfide bonds around the DNA-helix. Post-translationally, phosphorylated by SRPK1. In terms of tissue distribution, testis.

Its subcellular location is the nucleus. The protein resides in the chromosome. Its function is as follows. Protamines substitute for histones in the chromatin of sperm during the haploid phase of spermatogenesis. They compact sperm DNA into a highly condensed, stable and inactive complex. This is Sperm protamine P1 (PRM1) from Bos taurus (Bovine).